The following is a 311-amino-acid chain: Ribosomal RNA small subunit methyltransferase H (311 aa).

Residues 33 to 35 (AGH), aspartate 53, phenylalanine 80, aspartate 101, and glutamine 108 contribute to the S-adenosyl-L-methionine site.

This sequence belongs to the methyltransferase superfamily. RsmH family.

The protein localises to the cytoplasm. The catalysed reaction is cytidine(1402) in 16S rRNA + S-adenosyl-L-methionine = N(4)-methylcytidine(1402) in 16S rRNA + S-adenosyl-L-homocysteine + H(+). Its function is as follows. Specifically methylates the N4 position of cytidine in position 1402 (C1402) of 16S rRNA. The chain is Ribosomal RNA small subunit methyltransferase H from Alkaliphilus oremlandii (strain OhILAs) (Clostridium oremlandii (strain OhILAs)).